Here is a 97-residue protein sequence, read N- to C-terminus: Aspartyl/glutamyl-tRNA(Asn/Gln) amidotransferase subunit C (97 aa).

The protein belongs to the GatC family. In terms of assembly, heterotrimer of A, B and C subunits.

It catalyses the reaction L-glutamyl-tRNA(Gln) + L-glutamine + ATP + H2O = L-glutaminyl-tRNA(Gln) + L-glutamate + ADP + phosphate + H(+). The enzyme catalyses L-aspartyl-tRNA(Asn) + L-glutamine + ATP + H2O = L-asparaginyl-tRNA(Asn) + L-glutamate + ADP + phosphate + 2 H(+). Functionally, allows the formation of correctly charged Asn-tRNA(Asn) or Gln-tRNA(Gln) through the transamidation of misacylated Asp-tRNA(Asn) or Glu-tRNA(Gln) in organisms which lack either or both of asparaginyl-tRNA or glutaminyl-tRNA synthetases. The reaction takes place in the presence of glutamine and ATP through an activated phospho-Asp-tRNA(Asn) or phospho-Glu-tRNA(Gln). In Parasynechococcus marenigrum (strain WH8102), this protein is Aspartyl/glutamyl-tRNA(Asn/Gln) amidotransferase subunit C.